We begin with the raw amino-acid sequence, 1556 residues long: Ras guanine nucleotide exchange factor G (1556 aa).

Disordered regions lie at residues 19 to 63 (IGNI…KNRG), 93 to 141 (LQLN…SSTT), 163 to 239 (SHVT…LSPS), and 254 to 296 (ATDS…NNNS). Composition is skewed to low complexity over residues 25 to 54 (NNNN…SGSN) and 96 to 141 (NDTD…SSTT). The segment covering 170-186 (DDDDDDESSSSEEDFDS) has biased composition (acidic residues). The segment covering 196 to 216 (TSSTTATTTTTTTSVSPLTSS) has biased composition (low complexity). Positions 256-271 (DSDNQSLEPCNNKTIV) are enriched in polar residues. Residues 279–295 (DNNNNHNNNNNNNNNNN) are compositionally biased toward low complexity. Positions 307-353 (NKTFLDLDEKIYLKIFGYLFAEDLCSINRVSKHLCNIINNQQLWKDL) constitute an F-box 1 domain. Residues 385–416 (NNNNNNNNNNNNNNNNSNISNNNNNINNSNGN) are disordered. In terms of domain architecture, F-box 2 spans 679-726 (VFDISRVSDILLIKIFRNLDSIKDLSVCQRVSKRWNKAIAISSLWEQL). 2 disordered regions span residues 762–815 (QPSP…NGLN) and 827–1101 (GSNL…ITNN). Residues 827–848 (GSNLSNGGNSGSSFSPFNPLSG) show a composition bias toward low complexity. Residues 849-866 (SNGGSSFGPFGSGGGGGS) show a composition bias toward gly residues. Composition is skewed to low complexity over residues 867 to 880 (NSNI…LNSS) and 888 to 910 (FLAM…TIST). A compositionally biased stretch (polar residues) spans 911–935 (NCTPTGGSTTNSPNFQSPMVSSSTV). Composition is skewed to low complexity over residues 943-957 (SPNL…ISLS) and 972-1053 (PDSS…IQPI). Residues 1059 to 1076 (VNNNGSQSDLSKISDLNA) show a composition bias toward polar residues. A compositionally biased stretch (low complexity) spans 1077-1101 (NPNTTTTTTTNTIESSSSSSSITNN). The N-terminal Ras-GEF domain occupies 1116-1244 (MINVQKLMNL…LIRSFSRKLS (129 aa)). The disordered stretch occupies residues 1254-1279 (IGITGGKSSRKGGGSGSGSGSGGGSG). Positions 1264 to 1279 (KGGGSGSGSGSGGGSG) are enriched in gly residues. The region spanning 1317-1548 (PAEEIAKQLT…YRVSMQREPR (232 aa)) is the Ras-GEF domain.

In terms of biological role, promotes the exchange of Ras-bound GDP by GTP. In Dictyostelium discoideum (Social amoeba), this protein is Ras guanine nucleotide exchange factor G (gefG).